We begin with the raw amino-acid sequence, 229 residues long: Aminopyrimidine aminohydrolase (229 aa).

Asp44 serves as a coordination point for substrate. Residue Cys137 is the Nucleophile of the active site. Residues Tyr141 and Tyr167 each coordinate substrate. Residue Glu208 is the Proton donor of the active site.

It belongs to the TenA family. As to quaternary structure, homotetramer.

It catalyses the reaction 4-amino-5-aminomethyl-2-methylpyrimidine + H2O = 4-amino-5-hydroxymethyl-2-methylpyrimidine + NH4(+). The catalysed reaction is thiamine + H2O = 5-(2-hydroxyethyl)-4-methylthiazole + 4-amino-5-hydroxymethyl-2-methylpyrimidine + H(+). Its pathway is cofactor biosynthesis; thiamine diphosphate biosynthesis. Functionally, catalyzes an amino-pyrimidine hydrolysis reaction at the C5' of the pyrimidine moiety of thiamine compounds, a reaction that is part of a thiamine salvage pathway. Thus, catalyzes the conversion of 4-amino-5-aminomethyl-2-methylpyrimidine to 4-amino-5-hydroxymethyl-2-methylpyrimidine (HMP). Is also able to catalyze the hydrolytic cleavage of thiamine; however, this thiaminase activity may not be physiologically relevant. Therefore, is probably involved in the regeneration of the thiamine pyrimidine from thiamine degraded products present in the environment, rather than in thiamine degradation. The polypeptide is Aminopyrimidine aminohydrolase (Staphylococcus aureus (strain MRSA252)).